A 473-amino-acid polypeptide reads, in one-letter code: Photosystem II CP43 reaction center protein (473 aa).

A propeptide spanning residues 1 to 14 (MKTLYSLRRFYPVE) is cleaved from the precursor. The residue at position 15 (Thr15) is an N-acetylthreonine. The residue at position 15 (Thr15) is a Phosphothreonine. The next 5 membrane-spanning stretches (helical) occupy residues 69 to 93 (LFEV…PHLA), 134 to 155 (LLGP…KDRN), 178 to 200 (KALY…RKIT), 255 to 275 (KPFA…LSYS), and 291 to 312 (WFNN…ASQA). Residue Glu367 participates in [CaMn4O5] cluster binding. The helical transmembrane segment at 447–471 (RARAAAAGFEKGIDRDFEPVLSMTP) threads the bilayer.

Belongs to the PsbB/PsbC family. PsbC subfamily. PSII is composed of 1 copy each of membrane proteins PsbA, PsbB, PsbC, PsbD, PsbE, PsbF, PsbH, PsbI, PsbJ, PsbK, PsbL, PsbM, PsbT, PsbX, PsbY, PsbZ, Psb30/Ycf12, at least 3 peripheral proteins of the oxygen-evolving complex and a large number of cofactors. It forms dimeric complexes. The cofactor is Binds multiple chlorophylls and provides some of the ligands for the Ca-4Mn-5O cluster of the oxygen-evolving complex. It may also provide a ligand for a Cl- that is required for oxygen evolution. PSII binds additional chlorophylls, carotenoids and specific lipids..

The protein resides in the plastid. The protein localises to the chloroplast thylakoid membrane. One of the components of the core complex of photosystem II (PSII). It binds chlorophyll and helps catalyze the primary light-induced photochemical processes of PSII. PSII is a light-driven water:plastoquinone oxidoreductase, using light energy to abstract electrons from H(2)O, generating O(2) and a proton gradient subsequently used for ATP formation. This is Photosystem II CP43 reaction center protein from Amborella trichopoda.